A 576-amino-acid polypeptide reads, in one-letter code: WAP, Kazal, immunoglobulin, Kunitz and NTR domain-containing protein 2 (576 aa).

The N-terminal stretch at 1–34 is a signal peptide; sequence MWAPRCRRFWSRWEQVAALLLLLLLLGVPPRSLA. The WAP domain maps to 39–92; that stretch reads RYSHAGICPNDMNPNLWVDAQSTCRRECETDQECETYEKCCPNVCGTKSCVAAR. Cystine bridges form between cysteine 46–cysteine 79, cysteine 62–cysteine 83, cysteine 66–cysteine 78, cysteine 72–cysteine 88, cysteine 134–cysteine 164, cysteine 138–cysteine 157, cysteine 146–cysteine 175, and cysteine 231–cysteine 287. Positions 126–177 constitute a Kazal-like domain; it reads WDGQPVCKCKDRCEKEPSFTCASDGLTYYNRCYMDAEACSKGITLAVVTCRY. An Ig-like C2-type domain is found at 210 to 303; it reads PALLNNPVHQ…GVLRADFPLS (94 aa). An N-linked (GlcNAc...) asparagine glycan is attached at asparagine 319. 9 cysteine pairs are disulfide-bonded: cysteine 328/cysteine 378, cysteine 337/cysteine 361, cysteine 353/cysteine 374, cysteine 386/cysteine 436, cysteine 395/cysteine 419, cysteine 411/cysteine 432, cysteine 445/cysteine 515, cysteine 448/cysteine 517, and cysteine 459/cysteine 566. BPTI/Kunitz inhibitor domains are found at residues 328-378 and 386-436; these read CLKP…MLAC and CSLP…EESC. Residues 445 to 566 form the NTR domain; that stretch reads CRACKPRQKL…LREVMHKKTC (122 aa). N-linked (GlcNAc...) asparagine glycosylation is present at asparagine 519.

It belongs to the WFIKKN family. As to quaternary structure, interacts with both mature and propeptide myostatin/MSTN. In terms of tissue distribution, primarily expressed in ovary, testis and brain, but not in liver. In fetal tissues, it is primarily expressed in brain, skeletal muscle, thymus and kidney.

It is found in the secreted. In terms of biological role, protease-inhibitor that contains multiple distinct protease inhibitor domains. Probably has serine protease- and metalloprotease-inhibitor activity. Inhibits the biological activity of mature myostatin, but not activin. The protein is WAP, Kazal, immunoglobulin, Kunitz and NTR domain-containing protein 2 (WFIKKN2) of Homo sapiens (Human).